We begin with the raw amino-acid sequence, 218 residues long: Probable transaldolase (218 aa).

The active-site Schiff-base intermediate with substrate is the K87.

It belongs to the transaldolase family. Type 3B subfamily.

The protein resides in the cytoplasm. It carries out the reaction D-sedoheptulose 7-phosphate + D-glyceraldehyde 3-phosphate = D-erythrose 4-phosphate + beta-D-fructose 6-phosphate. It functions in the pathway carbohydrate degradation; pentose phosphate pathway; D-glyceraldehyde 3-phosphate and beta-D-fructose 6-phosphate from D-ribose 5-phosphate and D-xylulose 5-phosphate (non-oxidative stage): step 2/3. Its function is as follows. Transaldolase is important for the balance of metabolites in the pentose-phosphate pathway. This chain is Probable transaldolase, found in Bacteroides fragilis (strain ATCC 25285 / DSM 2151 / CCUG 4856 / JCM 11019 / LMG 10263 / NCTC 9343 / Onslow / VPI 2553 / EN-2).